An 88-amino-acid polypeptide reads, in one-letter code: uncharacterized protein (88 aa).

An N-terminal signal peptide occupies residues 1 to 22 (MGLTLKEHAEVCMALAESSASA).

This is an uncharacterized protein from Haemophilus influenzae (strain ATCC 51907 / DSM 11121 / KW20 / Rd).